We begin with the raw amino-acid sequence, 319 residues long: Acetyl-coenzyme A carboxylase carboxyl transferase subunit alpha (319 aa).

The 255-residue stretch at 39 to 293 (RLQKKSNDLT…KAVLEKQLHE (255 aa)) folds into the CoA carboxyltransferase C-terminal domain.

This sequence belongs to the AccA family. As to quaternary structure, acetyl-CoA carboxylase is a heterohexamer composed of biotin carboxyl carrier protein (AccB), biotin carboxylase (AccC) and two subunits each of ACCase subunit alpha (AccA) and ACCase subunit beta (AccD).

The protein resides in the cytoplasm. It catalyses the reaction N(6)-carboxybiotinyl-L-lysyl-[protein] + acetyl-CoA = N(6)-biotinyl-L-lysyl-[protein] + malonyl-CoA. It functions in the pathway lipid metabolism; malonyl-CoA biosynthesis; malonyl-CoA from acetyl-CoA: step 1/1. Component of the acetyl coenzyme A carboxylase (ACC) complex. First, biotin carboxylase catalyzes the carboxylation of biotin on its carrier protein (BCCP) and then the CO(2) group is transferred by the carboxyltransferase to acetyl-CoA to form malonyl-CoA. The protein is Acetyl-coenzyme A carboxylase carboxyl transferase subunit alpha of Neisseria gonorrhoeae (strain ATCC 700825 / FA 1090).